A 276-amino-acid polypeptide reads, in one-letter code: Large ribosomal subunit protein uL2c (276 aa).

The interval 225–276 (AMNPVDHPHGGGEGRTPIGRKKPVTPWGYSALGKKSRKRNRYSDASILRRRE) is disordered.

Belongs to the universal ribosomal protein uL2 family. As to quaternary structure, part of the 50S ribosomal subunit.

It localises to the plastid. The protein resides in the chloroplast. This is Large ribosomal subunit protein uL2c (rpl2) from Pinus thunbergii (Japanese black pine).